A 339-amino-acid polypeptide reads, in one-letter code: Glycerol-3-phosphate dehydrogenase [NAD(P)+] (339 aa).

Residues S14, Y15, H35, and K109 each contribute to the NADPH site. Positions 109, 138, and 140 each coordinate sn-glycerol 3-phosphate. An NADPH-binding site is contributed by A142. K194, D247, S257, R258, and N259 together coordinate sn-glycerol 3-phosphate. K194 acts as the Proton acceptor in catalysis. R258 lines the NADPH pocket. NADPH contacts are provided by V282 and E284.

The protein belongs to the NAD-dependent glycerol-3-phosphate dehydrogenase family.

The protein localises to the cytoplasm. The catalysed reaction is sn-glycerol 3-phosphate + NAD(+) = dihydroxyacetone phosphate + NADH + H(+). It catalyses the reaction sn-glycerol 3-phosphate + NADP(+) = dihydroxyacetone phosphate + NADPH + H(+). It functions in the pathway membrane lipid metabolism; glycerophospholipid metabolism. In terms of biological role, catalyzes the reduction of the glycolytic intermediate dihydroxyacetone phosphate (DHAP) to sn-glycerol 3-phosphate (G3P), the key precursor for phospholipid synthesis. The sequence is that of Glycerol-3-phosphate dehydrogenase [NAD(P)+] from Shewanella pealeana (strain ATCC 700345 / ANG-SQ1).